Here is a 430-residue protein sequence, read N- to C-terminus: Glutamate-1-semialdehyde 2,1-aminomutase 2 (430 aa).

Lys269 carries the post-translational modification N6-(pyridoxal phosphate)lysine.

The protein belongs to the class-III pyridoxal-phosphate-dependent aminotransferase family. HemL subfamily. In terms of assembly, homodimer. It depends on pyridoxal 5'-phosphate as a cofactor.

The protein resides in the cytoplasm. The catalysed reaction is (S)-4-amino-5-oxopentanoate = 5-aminolevulinate. The protein operates within porphyrin-containing compound metabolism; protoporphyrin-IX biosynthesis; 5-aminolevulinate from L-glutamyl-tRNA(Glu): step 2/2. The polypeptide is Glutamate-1-semialdehyde 2,1-aminomutase 2 (Lysinibacillus sphaericus (strain C3-41)).